Consider the following 455-residue polypeptide: Bifunctional protein GlmU (455 aa).

Residues 1-227 form a pyrophosphorylase region; it reads MGLSVIILAA…CEEVQGVNDR (227 aa). UDP-N-acetyl-alpha-D-glucosamine-binding positions include 8–11, Lys22, Gln73, 78–79, 100–102, Gly137, Glu152, Asn167, and Asn225; these read LAAG, GT, and YGD. Position 102 (Asp102) interacts with Mg(2+). Asn225 contributes to the Mg(2+) binding site. The tract at residues 228–248 is linker; it reads WELTKLERYYQRLMAKKLSLA. Positions 249–455 are N-acetyltransferase; sequence GVTIIDPERF…KGWHRPTKKE (207 aa). UDP-N-acetyl-alpha-D-glucosamine is bound by residues Arg332 and Lys350. The active-site Proton acceptor is the His362. Residues Tyr365 and Asn376 each coordinate UDP-N-acetyl-alpha-D-glucosamine. Acetyl-CoA is bound by residues Ala379, 385–386, Ser404, Ala422, and Arg439; that span reads NY.

In the N-terminal section; belongs to the N-acetylglucosamine-1-phosphate uridyltransferase family. It in the C-terminal section; belongs to the transferase hexapeptide repeat family. In terms of assembly, homotrimer. It depends on Mg(2+) as a cofactor.

Its subcellular location is the cytoplasm. It carries out the reaction alpha-D-glucosamine 1-phosphate + acetyl-CoA = N-acetyl-alpha-D-glucosamine 1-phosphate + CoA + H(+). The catalysed reaction is N-acetyl-alpha-D-glucosamine 1-phosphate + UTP + H(+) = UDP-N-acetyl-alpha-D-glucosamine + diphosphate. It participates in nucleotide-sugar biosynthesis; UDP-N-acetyl-alpha-D-glucosamine biosynthesis; N-acetyl-alpha-D-glucosamine 1-phosphate from alpha-D-glucosamine 6-phosphate (route II): step 2/2. The protein operates within nucleotide-sugar biosynthesis; UDP-N-acetyl-alpha-D-glucosamine biosynthesis; UDP-N-acetyl-alpha-D-glucosamine from N-acetyl-alpha-D-glucosamine 1-phosphate: step 1/1. Its pathway is bacterial outer membrane biogenesis; LPS lipid A biosynthesis. Functionally, catalyzes the last two sequential reactions in the de novo biosynthetic pathway for UDP-N-acetylglucosamine (UDP-GlcNAc). The C-terminal domain catalyzes the transfer of acetyl group from acetyl coenzyme A to glucosamine-1-phosphate (GlcN-1-P) to produce N-acetylglucosamine-1-phosphate (GlcNAc-1-P), which is converted into UDP-GlcNAc by the transfer of uridine 5-monophosphate (from uridine 5-triphosphate), a reaction catalyzed by the N-terminal domain. The chain is Bifunctional protein GlmU from Coxiella burnetii (strain CbuK_Q154) (Coxiella burnetii (strain Q154)).